Consider the following 275-residue polypeptide: Structure-specific endonuclease subunit SLX1 (275 aa).

A GIY-YIG domain is found at 12 to 95; sequence RFFGVYLLYC…QHPHASRRLA (84 aa). Residues 148–161 show a composition bias toward pro residues; the sequence is HVPLAFGPPPPQAP. The interval 148 to 179 is disordered; it reads HVPLAFGPPPPQAPAPRRRAGPFDDAEPEPDQ. The segment at 186–238 adopts an SLX1-type zinc-finger fold; it reads CSLCAQTIQDEEGPLCCPHPGCLLRAHVICLAEEFLQEEPGQLLPLEGQCPCC.

The protein belongs to the SLX1 family. Forms a heterodimer with SLX4. It depends on a divalent metal cation as a cofactor.

It localises to the nucleus. In terms of biological role, catalytic subunit of the SLX1-SLX4 structure-specific endonuclease that resolves DNA secondary structures generated during DNA repair and recombination. Has endonuclease activity towards branched DNA substrates, introducing single-strand cuts in duplex DNA close to junctions with ss-DNA. Has a preference for 5'-flap structures, and promotes symmetrical cleavage of static and migrating Holliday junctions (HJs). Resolves HJs by generating two pairs of ligatable, nicked duplex products. The chain is Structure-specific endonuclease subunit SLX1 from Homo sapiens (Human).